The sequence spans 218 residues: Large ribosomal subunit protein uL4 (218 aa).

Residues Ala-46 to Ala-100 form a disordered region. The segment covering Gly-62–Gly-73 has biased composition (basic residues).

It belongs to the universal ribosomal protein uL4 family. Part of the 50S ribosomal subunit.

Its function is as follows. One of the primary rRNA binding proteins, this protein initially binds near the 5'-end of the 23S rRNA. It is important during the early stages of 50S assembly. It makes multiple contacts with different domains of the 23S rRNA in the assembled 50S subunit and ribosome. In terms of biological role, forms part of the polypeptide exit tunnel. This chain is Large ribosomal subunit protein uL4, found in Corynebacterium efficiens (strain DSM 44549 / YS-314 / AJ 12310 / JCM 11189 / NBRC 100395).